Here is a 354-residue protein sequence, read N- to C-terminus: Nicotinate-nucleotide--dimethylbenzimidazole phosphoribosyltransferase (354 aa).

Glu319 functions as the Proton acceptor in the catalytic mechanism.

Belongs to the CobT family.

It carries out the reaction 5,6-dimethylbenzimidazole + nicotinate beta-D-ribonucleotide = alpha-ribazole 5'-phosphate + nicotinate + H(+). It functions in the pathway nucleoside biosynthesis; alpha-ribazole biosynthesis; alpha-ribazole from 5,6-dimethylbenzimidazole: step 1/2. Its function is as follows. Catalyzes the synthesis of alpha-ribazole-5'-phosphate from nicotinate mononucleotide (NAMN) and 5,6-dimethylbenzimidazole (DMB). The chain is Nicotinate-nucleotide--dimethylbenzimidazole phosphoribosyltransferase from Chlorobium chlorochromatii (strain CaD3).